Here is a 224-residue protein sequence, read N- to C-terminus: Large ribosomal subunit protein uL3 (224 aa).

Positions 132–153 (SQTKTHGTHEYQRHPGAIGQRK) are disordered.

This sequence belongs to the universal ribosomal protein uL3 family. As to quaternary structure, part of the 50S ribosomal subunit. Forms a cluster with proteins L14 and L19.

Functionally, one of the primary rRNA binding proteins, it binds directly near the 3'-end of the 23S rRNA, where it nucleates assembly of the 50S subunit. The sequence is that of Large ribosomal subunit protein uL3 from Myxococcus xanthus (strain DK1622).